Reading from the N-terminus, the 620-residue chain is Dopamine beta-hydroxylase (620 aa).

At 1 to 19 the chain is on the cytoplasmic side; that stretch reads MQPHLSHQPCWSLPSPSVR. A helical; Signal-anchor for type II membrane protein membrane pass occupies residues 20–40; it reads EAASMYGTAVAIFLVILVAAL. Over 41 to 620 the chain is Intragranular; it reads QGSEPPESPF…FVVITHGGRH (580 aa). A DOMON domain is found at 60–176; the sequence is GTLELSWNVS…DTVHLVYGIL (117 aa). N-linked (GlcNAc...) asparagine glycosylation is found at Asn67 and Asn187. Intrachain disulfides connect Cys157–Cys599, Cys235–Cys286, Cys272–Cys298, Cys393–Cys506, Cys397–Cys568, and Cys469–Cys491. Residue Tyr233 is part of the active site. Cu(2+) is bound by residues His265 and His266. Residue Asn274 is glycosylated (N-linked (GlcNAc...) asparagine). Residue His336 coordinates Cu(2+). At Ser349 the chain carries Phosphoserine; by CaMK. Residue His415 is part of the active site. Residues His415 and His417 each contribute to the Cu(2+) site. Asn475 carries N-linked (GlcNAc...) asparagine glycosylation. Met490 is a Cu(2+) binding site. 2 N-linked (GlcNAc...) asparagine glycosylation sites follow: Asn569 and Asn587.

Belongs to the copper type II ascorbate-dependent monooxygenase family. Homotetramer; composed of two disulfide-linked dimers. Cu(2+) is required as a cofactor. Post-translationally, proteolytic cleavage after the membrane-anchor leads to the release of the soluble form. N-glycosylated. Chromaffin granules of the adrenal medulla and synaptic vesicles of the sympathetic nervous system.

Its subcellular location is the cytoplasmic vesicle. It is found in the secretory vesicle lumen. The protein resides in the secretory vesicle. The protein localises to the chromaffin granule lumen. It localises to the secreted. Its subcellular location is the secretory vesicle membrane. It is found in the chromaffin granule membrane. It catalyses the reaction dopamine + 2 L-ascorbate + O2 = (R)-noradrenaline + 2 monodehydro-L-ascorbate radical + H2O. Its pathway is catecholamine biosynthesis; (R)-noradrenaline biosynthesis; (R)-noradrenaline from dopamine: step 1/1. Catalyzes the hydroxylation of dopamine to noradrenaline (also known as norepinephrine), and is thus vital for regulation of these neurotransmitters. In Rattus norvegicus (Rat), this protein is Dopamine beta-hydroxylase (Dbh).